The primary structure comprises 649 residues: Epithelial sodium channel subunit gamma (649 aa).

Residues 1–55 (MAPGEKIKAKIKKNLPVTGPQAPTIKELMRWYCLNTNTHGCRRIVVSRGRLRRLL) lie on the Cytoplasmic side of the membrane. A helical membrane pass occupies residues 56–76 (WIGFTLTAVALILWQCALLVF). Topologically, residues 77-541 (SFYTVSVSIK…GGQLGLWMSC (465 aa)) are extracellular. Disulfide bonds link cysteine 100/cysteine 283, cysteine 207/cysteine 214, cysteine 260/cysteine 267, cysteine 372/cysteine 457, cysteine 394/cysteine 453, cysteine 398/cysteine 449, cysteine 407/cysteine 434, and cysteine 409/cysteine 423. The interval 135-221 (RKRREAESWN…SDCATYTFSS (87 aa)) is gating release of inhibition by proteolysis (GRIP); protease-sensitive region that is responsible for the proteolytic activation of the channel. Asparagine 209 carries N-linked (GlcNAc...) asparagine glycosylation. An N-linked (GlcNAc...) asparagine glycan is attached at asparagine 497. A helical transmembrane segment spans residues 542 to 562 (SVVCVIEIIEVFFIDFFSIIA). Residues 563 to 649 (RRQWQKAKEW…LTDTQMLDEL (87 aa)) lie on the Cytoplasmic side of the membrane. Residues 623–627 (PPPKY) carry the PY motif; recruits WW domain-containing proteins and is thereby required for ubiquitination and inhibition of the channel by NEDD4 and NEDD4L motif.

It belongs to the amiloride-sensitive sodium channel (TC 1.A.6) family. SCNN1G subfamily. As to quaternary structure, component of the heterotrimeric epithelial sodium channel (ENaC) composed of an alpha/SCNN1A, a beta/SCNN1B and a gamma/SCNN1G subunit. An additional delta/SCNN1D subunit can replace the alpha/SCNN1A subunit to form an alternative channel with specific properties. Interacts with WWP1 (via WW domains). Interacts with WWP2 (via WW domains); inhibits the channel. Interacts with the full-length immature form of PCSK9 (pro-PCSK9); inhibits ENaC by promoting its proteasomal degradation. Interacts with BPIFA1; the interaction is indirect via SCNN1B and inhibits the proteolytic maturation of SCNN1A and SCNN1G and the activation of ENaC. Phosphorylated on serine and threonine residues. Aldosterone and insulin increase the basal level of phosphorylation. In terms of processing, ubiquitinated. Can be ubiquitinated at multiple sites and undergo monoubiquitination and polyubiquitination. Ubiquitination by NEDD4 or NEDD4L inhibits the ENaC channel through endocytosis, intracellular retention and degradation of its individual subunits. Post-translationally, ENaC is activated through the proteolytic maturation of its subunits. Furin cleaves the SCNN1G subunit first, followed by cleavage by prostasin (PRSS8), which results in a stepwise increase in the open probability of the channel due to the release of an inhibitory tract. BPIFA1, which is recruited by the SCNN1B subunit, prevents the proteolytic activation of ENaC. N-glycosylated. N-linked glycans are processed to complex type during ENaC complex assembly and transport to the plasma membrane. As to expression, expressed in kidney (at protein level).

Its subcellular location is the apical cell membrane. The enzyme catalyses Na(+)(in) = Na(+)(out). Originally identified and characterized by its inhibition by the diuretic drug amiloride. This is one of the three pore-forming subunits of the heterotrimeric epithelial sodium channel (ENaC), a critical regulator of sodium balance and fluid homeostasis. ENaC operates in epithelial tissues, where it mediates the electrodiffusion of sodium ions from extracellular fluid through the apical membrane of cells, with water following osmotically. It plays a key role in maintaining sodium homeostasis through electrogenic sodium reabsorption in the kidneys. Additionally, ENaC is essential for airway surface liquid homeostasis, which is crucial for proper mucus clearance. In Homo sapiens (Human), this protein is Epithelial sodium channel subunit gamma.